Here is a 631-residue protein sequence, read N- to C-terminus: ATP-dependent protease PrkA (631 aa).

At threonine 217 the chain carries Phosphothreonine. Residue serine 219 is modified to Phosphoserine.

Belongs to the PrkA family. Phosphorylated by PrkC on two sites, Thr-217 and Ser-219, with the threonine being the major site of modification.

It is found in the forespore. The protein localises to the spore coat. It carries out the reaction Hydrolysis of proteins in presence of ATP.. Hydrolase activity is regulated by phosphorylation by the Ser/Thr kinase PrkC, probably allowing fine control of sporulation. Phosphorylation by PrkC does not prevent ATP fixation but it inhibits specifically PrkA protease activity and down-regulates the sporulation processes. Hydrolase activity is inhibited by a protease inhibitor, phenylmethylsulfonyl fluoride (PMSF). Potential kinase activity requires the presence of MgCl(2) and is inhibited in the presence of MnCl(2). In terms of biological role, ATP-dependent protease that regulates sporulation. Is able to bind and hydrolyze ATP. This ATP-dependent protease activity is necessary for efficient sporulation of B.subtilis. In vitro, can hydrolyze alpha-casein, an exogenous substrate of Lon proteases, in an ATP-dependent manner. PrkA also modulates sporulation by negatively regulating the transcriptional regulator Hpr/ScoC to induce the expression of sigK. The control of sporulation mediated via the Hpr/ScoC regulator is probably indirect. PrkA was originally thought to be a protein kinase, as it has been shown to phosphorylate in vitro an unidentified 60 kDa protein from B.subtilis crude extracts at a serine residue. However, Zhang et al. did not observe autophosphorylation or kinase activity for this protein, suggesting that it may have lost its kinase activity during evolution or may be a pseudokinase. The polypeptide is ATP-dependent protease PrkA (Bacillus subtilis (strain 168)).